We begin with the raw amino-acid sequence, 310 residues long: Transcriptional regulator NRG1 (310 aa).

The disordered stretch occupies residues 85–131 (YYMGPPAQHRLPTPPPYPMSSPTTATAATPLSQQSPHLQPQQTLQQP). Residues 104 to 131 (SSPTTATAATPLSQQSPHLQPQQTLQQP) show a composition bias toward low complexity. 2 C2H2-type zinc fingers span residues 228-250 (HVCKVCSRSFTTSGHLARHNRIH) and 256-280 (HQCPWPTCEARFARQDNCNQHYKTH).

It is found in the nucleus. Its function is as follows. Transcriptional repressor that binds NRG1 response elements (NRE) of target promoters. Involved in regulation of chlamydospore formation, hyphal growth, virulence, and stress response. Plays a key role in regulating true hyphal growth, but does not regulate pseudohyphal growth in the same fashion. Directs transcriptional repression of a subset of filament-specific genes such as HWP1, HYR1, ALS8, HWP1, or ECE1; via the TUP1 pathway. Functions with UME6 in a negative feedback loop to control the level and duration of filament-specific gene expression in response to inducing conditions. Plays a key role in biofilm formation and dispersion. Also plays the role of a negative regulator of virulence in mice models. Required for the expression of the cell wall genes RBR1. This chain is Transcriptional regulator NRG1 (NRG1), found in Candida albicans (strain SC5314 / ATCC MYA-2876) (Yeast).